The following is a 210-amino-acid chain: Probable GTP-binding protein EngB (210 aa).

One can recognise an EngB-type G domain in the interval 25-199; the sequence is CGIEVAFAGR…RQKLDSWFSE (175 aa). GTP-binding positions include 33 to 40, 60 to 64, 78 to 81, 145 to 148, and 178 to 180; these read GRSNAGKS, GRTQL, DLPG, TKAD, and FSS. The Mg(2+) site is built by Ser-40 and Thr-62.

It belongs to the TRAFAC class TrmE-Era-EngA-EngB-Septin-like GTPase superfamily. EngB GTPase family. The cofactor is Mg(2+).

In terms of biological role, necessary for normal cell division and for the maintenance of normal septation. This chain is Probable GTP-binding protein EngB, found in Salmonella dublin (strain CT_02021853).